The primary structure comprises 420 residues: RLTYYTPQYQTKDTDILAAFRMTPQPGVPPEEAGAAVAAESSTGTWTTVWTDGLTSLDRYKGRCYDIEPVAGETNQYIAYVAYPLDLFEEGSVTNLLTSIVGNVFGFKALRALRLEDLRIPPAYSKTFLGPPHGIQVERDKLNKYGRPLLGCTIKPKLGLSAKNYGRAVYECLRGGLDFTKDDETVNSQPFIRWRDRFLFVAEALFKSQAETGEIKGHYLNATAGHCDEMIKRAVFARELGAPIVMHDYLTGGYTANTSLAFYCRDNGLLLHIHRAMHAVIDRQKNHGMHFRVLAKTLRMSGGDHIHAGTVVGKLEGEREVTLGFVDLLRDDYIEKDRSRGIYFTQDWVSMPGVLPVASGGIHVWHMPALTEIFGDDSVLQFGGGTLGHPWGNAPGAVANRVALEACVQARNEGRDLARE.

The substrate site is built by Asn-103 and Thr-153. The active-site Proton acceptor is the Lys-155. Lys-157 is a binding site for substrate. Residues Lys-181, Asp-183, and Glu-184 each contribute to the Mg(2+) site. N6-carboxylysine is present on Lys-181. His-274 functions as the Proton acceptor in the catalytic mechanism. Substrate-binding residues include Arg-275, His-307, and Ser-359.

It belongs to the RuBisCO large chain family. Type I subfamily. As to quaternary structure, heterohexadecamer of 8 large chains and 8 small chains; disulfide-linked. The disulfide link is formed within the large subunit homodimers. The cofactor is Mg(2+). Post-translationally, the disulfide bond which can form in the large chain dimeric partners within the hexadecamer appears to be associated with oxidative stress and protein turnover.

Its subcellular location is the plastid. It is found in the chloroplast. The enzyme catalyses 2 (2R)-3-phosphoglycerate + 2 H(+) = D-ribulose 1,5-bisphosphate + CO2 + H2O. It carries out the reaction D-ribulose 1,5-bisphosphate + O2 = 2-phosphoglycolate + (2R)-3-phosphoglycerate + 2 H(+). Functionally, ruBisCO catalyzes two reactions: the carboxylation of D-ribulose 1,5-bisphosphate, the primary event in carbon dioxide fixation, as well as the oxidative fragmentation of the pentose substrate in the photorespiration process. Both reactions occur simultaneously and in competition at the same active site. The chain is Ribulose bisphosphate carboxylase large chain from Anemia mexicana (Mexican fern).